The sequence spans 407 residues: Tyrosine--tRNA ligase (407 aa).

Tyr35 contributes to the L-tyrosine binding site. A 'HIGH' region motif is present at residues 40–49; it reads PTADSLHVGH. The L-tyrosine site is built by Tyr168 and Gln172. The 'KMSKS' region motif lies at 228-232; sequence KMGKT. Lys231 provides a ligand contact to ATP. One can recognise an S4 RNA-binding domain in the interval 341–405; that stretch reads NPLVDLLAKC…RGKKNFNRIV (65 aa).

This sequence belongs to the class-I aminoacyl-tRNA synthetase family. TyrS type 1 subfamily. Homodimer.

It localises to the cytoplasm. It catalyses the reaction tRNA(Tyr) + L-tyrosine + ATP = L-tyrosyl-tRNA(Tyr) + AMP + diphosphate + H(+). Functionally, catalyzes the attachment of tyrosine to tRNA(Tyr) in a two-step reaction: tyrosine is first activated by ATP to form Tyr-AMP and then transferred to the acceptor end of tRNA(Tyr). The protein is Tyrosine--tRNA ligase of Clostridium botulinum (strain 657 / Type Ba4).